Here is a 151-residue protein sequence, read N- to C-terminus: Large ribosomal subunit protein uL13 (151 aa).

The interval 129–151 (PTHPHDAQKPKELNINTIPGAES) is disordered. Residues 131 to 140 (HPHDAQKPKE) are compositionally biased toward basic and acidic residues.

The protein belongs to the universal ribosomal protein uL13 family. As to quaternary structure, part of the 50S ribosomal subunit.

This protein is one of the early assembly proteins of the 50S ribosomal subunit, although it is not seen to bind rRNA by itself. It is important during the early stages of 50S assembly. The chain is Large ribosomal subunit protein uL13 from Trichormus variabilis (strain ATCC 29413 / PCC 7937) (Anabaena variabilis).